The chain runs to 717 residues: Protein E2 homolog (717 aa).

Belongs to the poxviridae E2 protein family.

The chain is Protein E2 homolog from Fowlpox virus (strain NVSL) (FPV).